The following is a 364-amino-acid chain: Histidinol-phosphate aminotransferase (364 aa).

Lys-220 carries the post-translational modification N6-(pyridoxal phosphate)lysine.

It belongs to the class-II pyridoxal-phosphate-dependent aminotransferase family. Histidinol-phosphate aminotransferase subfamily. As to quaternary structure, homodimer. Pyridoxal 5'-phosphate serves as cofactor.

It catalyses the reaction L-histidinol phosphate + 2-oxoglutarate = 3-(imidazol-4-yl)-2-oxopropyl phosphate + L-glutamate. It participates in amino-acid biosynthesis; L-histidine biosynthesis; L-histidine from 5-phospho-alpha-D-ribose 1-diphosphate: step 7/9. This is Histidinol-phosphate aminotransferase from Stenotrophomonas maltophilia (strain R551-3).